The chain runs to 897 residues: Transportin-2 (897 aa).

HEAT repeat units lie at residues 9-36 (GLQQVLQLLKDSQSPNTATQRIVQDKLK), 41-79 (FPDFNNYLIFVLTRLKSEDEPTRSLSGLILKNNVKAHYQ), 88-121 (FIKQECLNNIGDASSLIRATIGILITTIASKGEL), 127-164 (LLPQLCNLLNSEDYNTCEGAFGALQKICEDSSELLDSD), 171-201 (NIMIPKFLQFFKHCSPKIRSHAIACVNQFIM), 214-241 (FIEHLFALAVDDDPEVRKNVCRALVMLL), 253-280 (HSIIQYMLQRTQDHDENVALEACEFWLT), 296-386 (VQLI…LANV), 394-422 (HLLPLLKGLLFHPEWVVKESGILVLGAIA), 434-461 (PELIPHLIQCLSDKKALVRSIACWTLSR), 475-508 (LKPLMTELLKRILDGNKRVQEAACSAFATLEEEA), 516-549 (LSYILDTLVFAFGKYQHKNLLILYDAIGTLADSV), 557-595 (EYIQKLMPPLIQKWNELKDEDKDLFPLLECLSSVATALQ), 603-654 (EPVY…GLGG), 665-696 (IMTLLFQCMQDSMPEVRQSSFALLGDLTKACF), 704-737 (AEFMPILGTNLNPEFISVCNNATWAIGEICMQMG), 745-790 (QMVL…YVCP), 798-831 (QQFIRPWCTSLRNIRDNEEKDSAFRGICMMIGVN), 840-871 (IFFCDAVASWVSPKDDLRDMFYKILHGFKDQV), and 874-894 (DNWQQFSEQFPPLLKERLAAF). Positions 31–99 (VQDKLKQLNQ…KQECLNNIGD (69 aa)) constitute an Importin N-terminal domain. The tract at residues 325–364 (AVPDSEQDIKPRFHKSRTVTLPHEAERPDGSEDAEDDDDD) is disordered. Residues 355–364 (SEDAEDDDDD) show a composition bias toward acidic residues. At K862 the chain carries N6-acetyllysine.

The protein belongs to the importin beta family. Importin beta-2 subfamily.

Its subcellular location is the cytoplasm. It is found in the nucleus. In terms of biological role, probably functions in nuclear protein import as nuclear transport receptor. Serves as receptor for nuclear localization signals (NLS) in cargo substrates. Is thought to mediate docking of the importin/substrate complex to the nuclear pore complex (NPC) through binding to nucleoporin and the complex is subsequently translocated through the pore by an energy requiring, Ran-dependent mechanism. At the nucleoplasmic side of the NPC, Ran binds to the importin, the importin/substrate complex dissociates and importin is re-exported from the nucleus to the cytoplasm where GTP hydrolysis releases Ran. The directionality of nuclear import is thought to be conferred by an asymmetric distribution of the GTP- and GDP-bound forms of Ran between the cytoplasm and nucleus. The chain is Transportin-2 (TNPO2) from Homo sapiens (Human).